The following is a 184-amino-acid chain: Protein GrpE (184 aa).

The segment covering 1-12 (MADEQLNEKDLN) has biased composition (basic and acidic residues). Residues 1-22 (MADEQLNEKDLNAEEAGAVDNG) are disordered.

It belongs to the GrpE family. Homodimer.

Its subcellular location is the cytoplasm. Its function is as follows. Participates actively in the response to hyperosmotic and heat shock by preventing the aggregation of stress-denatured proteins, in association with DnaK and GrpE. It is the nucleotide exchange factor for DnaK and may function as a thermosensor. Unfolded proteins bind initially to DnaJ; upon interaction with the DnaJ-bound protein, DnaK hydrolyzes its bound ATP, resulting in the formation of a stable complex. GrpE releases ADP from DnaK; ATP binding to DnaK triggers the release of the substrate protein, thus completing the reaction cycle. Several rounds of ATP-dependent interactions between DnaJ, DnaK and GrpE are required for fully efficient folding. In Pseudomonas putida (strain W619), this protein is Protein GrpE.